Here is a 395-residue protein sequence, read N- to C-terminus: Calreticulin (395 aa).

A signal peptide spans 1-15 (MKSLCLLAIVAVVSA). Cys-101 and Cys-133 are disulfide-bonded. Residues Tyr-105, Lys-107, Tyr-124, and Asp-131 each coordinate an alpha-D-glucoside. Tandem repeats lie at residues 186–197 (AQTGSLEEDWDL), 205–216 (DPDAKKPEDWDE), 222–233 (DAEDAKPEDWEK), 239–250 (DPDAKKPEDWDD), 254–264 (GEWEPPMIDNP), 268–278 (GEWKPKQIKNP), and 282–292 (GKWIHPEIENP). The interval 186 to 250 (AQTGSLEEDW…DAKKPEDWDD (65 aa)) is 4 X approximate repeats. The interval 193-301 (EDWDLLPAKK…PEYTPDDELY (109 aa)) is P-domain. Basic and acidic residues predominate over residues 202-212 (KIKDPDAKKPE). Residues 202–255 (KIKDPDAKKPEDWDEREYIDDAEDAKPEDWEKPEHIPDPDAKKPEDWDDEMDGE) are disordered. Acidic residues predominate over residues 213–224 (DWDEREYIDDAE). Over residues 225–246 (DAKPEDWEKPEHIPDPDAKKPE) the composition is skewed to basic and acidic residues. Positions 254 to 292 (GEWEPPMIDNPEYKGEWKPKQIKNPAYKGKWIHPEIENP) are 3 X approximate repeats. Residues 302–395 (SYESWGAIGF…KEEEEGHDEL (94 aa)) are C-domain. Residue Asp-312 coordinates an alpha-D-glucoside. The span at 340 to 380 (ETFDKLKTVEKEKKEKADEETRKAEEEARKKAEEEKEAKKD) shows a compositional bias: basic and acidic residues. The interval 340–395 (ETFDKLKTVEKEKKEKADEETRKAEEEARKKAEEEKEAKKDDDEEEKEEEEGHDEL) is disordered. Residues 381–395 (DDEEEKEEEEGHDEL) show a composition bias toward acidic residues. The short motif at 392–395 (HDEL) is the Prevents secretion from ER element.

The protein belongs to the calreticulin family. Cleaved by caspase ced-3 in vitro.

The protein resides in the endoplasmic reticulum lumen. In terms of biological role, molecular calcium-binding chaperone promoting folding, oligomeric assembly and quality control in the endoplasmic reticulum (ER) via the calreticulin/calnexin cycle. This lectin may interact transiently with almost all of the monoglucosylated glycoproteins that are synthesized in the ER. Probably by controlling the folding of extracellular matrix protein unc-52/Perlecan, may play a role in the formation of fibrous organelles, a hemidesmosome-like structure attaching muscles to the epidermis. Protects dopaminergic neurons against oxidative stress-induced neurodegeneration. May play a role in protection against ER stress. Plays a role in modulating lifespan, acting by influencing ER calcium homeostasis. This is Calreticulin (crt-1) from Caenorhabditis elegans.